Reading from the N-terminus, the 262-residue chain is 5'-nucleotidase SurE (262 aa).

Residues D11, D12, S43, and N101 each coordinate a divalent metal cation. A compositionally biased stretch (basic and acidic residues) spans 220 to 229 (SAGDGPKEWP). The disordered stretch occupies residues 220 to 246 (SAGDGPKEWPSDVSQIETNSPSLTPIQ). Over residues 231–244 (DVSQIETNSPSLTP) the composition is skewed to polar residues.

It belongs to the SurE nucleotidase family. A divalent metal cation is required as a cofactor.

The protein localises to the cytoplasm. The catalysed reaction is a ribonucleoside 5'-phosphate + H2O = a ribonucleoside + phosphate. Nucleotidase that shows phosphatase activity on nucleoside 5'-monophosphates. The polypeptide is 5'-nucleotidase SurE (Prochlorococcus marinus (strain SARG / CCMP1375 / SS120)).